Consider the following 264-residue polypeptide: Diphthine synthase (264 aa).

S-adenosyl-L-methionine contacts are provided by residues Leu10, Asp87, Val90, 115–116 (SI), Leu166, Ala209, and His234.

Belongs to the diphthine synthase family. In terms of assembly, homodimer.

It catalyses the reaction 2-[(3S)-amino-3-carboxypropyl]-L-histidyl-[translation elongation factor 2] + 3 S-adenosyl-L-methionine = diphthine-[translation elongation factor 2] + 3 S-adenosyl-L-homocysteine + 3 H(+). It participates in protein modification; peptidyl-diphthamide biosynthesis. S-adenosyl-L-methionine-dependent methyltransferase that catalyzes the trimethylation of the amino group of the modified target histidine residue in translation elongation factor 2 (EF-2), to form an intermediate called diphthine. The three successive methylation reactions represent the second step of diphthamide biosynthesis. The sequence is that of Diphthine synthase from Thermococcus gammatolerans (strain DSM 15229 / JCM 11827 / EJ3).